The primary structure comprises 515 residues: Low affinity ammonium transporter (515 aa).

At 1–78 (MSTSSSVTQK…IIGNSFGTTN (78 aa)) the chain is on the extracellular side. Residues 79-99 (AGQLSWFASAYSLTVGTFILI) form a helical membrane-spanning segment. The Cytoplasmic segment spans residues 100 to 111 (AGRLGDIFGHKK). A helical membrane pass occupies residues 112 to 132 (FFVLGFFWYALWSLLAGFSVY). The Extracellular portion of the chain corresponds to 133-140 (SNQIFFDC). A helical transmembrane segment spans residues 141–161 (CRAFQGMGPAFLLPNAIAILG). Over 162–171 (RTYKPGRRKN) the chain is Cytoplasmic. Residues 172 to 192 (MVFSLFGASAPGGFFLGAVFS) traverse the membrane as a helical segment. Residues 193–202 (SMLGQLAWWP) lie on the Extracellular side of the membrane. Residues 203–223 (WAYWIMGIACFVLAVAGYFVI) traverse the membrane as a helical segment. Topologically, residues 224–241 (PHTPMPSRDASSFKLLER) are cytoplasmic. A helical membrane pass occupies residues 242 to 262 (IDFAGSVTGVVGLILFNFAWN). The Extracellular portion of the chain corresponds to 263-270 (QGPVVGWQ). A helical membrane pass occupies residues 271 to 291 (TPYTYALLIVGTFFLVIFAYI). Over 292 to 310 (ESRAAFPLLPFAALSSDTA) the chain is Cytoplasmic. The helical transmembrane segment at 311-331 (FVLSCIAAGWASFGIWIFYTW) threads the bilayer. Topologically, residues 332-346 (QFMEDSRGQTPLLSS) are extracellular. The helical transmembrane segment at 347–367 (AQFSPVAISGFCAAVTTGFLL) threads the bilayer. Residues 368–374 (SHTPPST) are Cytoplasmic-facing. The chain crosses the membrane as a helical span at residues 375-395 (VMLFAMTAFTVGTILIATAPV). The Extracellular portion of the chain corresponds to 396–403 (HQTYWAQT). A helical transmembrane segment spans residues 404–424 (FVSIIVMPWGMDMSFPAATIM). The Cytoplasmic segment spans residues 425–435 (LSDSMPHEHQG). Residues 436-456 (LAASLVNTVVNYSISIGLGIA) form a helical membrane-spanning segment. At 457–479 (GTIESRVNDGGAKPLKGYRCSWY) the chain is on the extracellular side. A helical transmembrane segment spans residues 480 to 500 (MGIGLSGLGIFVAATYAWSTF). The Cytoplasmic portion of the chain corresponds to 501-515 (MKSKKRISEKQHFIE).

The protein belongs to the major facilitator superfamily.

The protein resides in the cell membrane. Its function is as follows. Low affinity ammonium transporter of the plasma membrane. May be involved in drug resistance through pumping them out of the cell. The chain is Low affinity ammonium transporter from Saccharomyces cerevisiae (strain ATCC 204508 / S288c) (Baker's yeast).